A 126-amino-acid chain; its full sequence is Glycine cleavage system H protein (126 aa).

A Lipoyl-binding domain is found at 23–104; it reads TLTVGITDHA…PYDNWLFKIK (82 aa). Position 64 is an N6-lipoyllysine (lysine 64).

It belongs to the GcvH family. The glycine cleavage system is composed of four proteins: P, T, L and H. It depends on (R)-lipoate as a cofactor.

The glycine cleavage system catalyzes the degradation of glycine. The H protein shuttles the methylamine group of glycine from the P protein to the T protein. In Paraburkholderia phymatum (strain DSM 17167 / CIP 108236 / LMG 21445 / STM815) (Burkholderia phymatum), this protein is Glycine cleavage system H protein.